We begin with the raw amino-acid sequence, 336 residues long: NADH-cytochrome b5 reductase 2 (336 aa).

Residues 28–50 traverse the membrane as a helical segment; that stretch reads GGSSNGALYVGIGAAGLAGAYIY. Positions 84-189 constitute an FAD-binding FR-type domain; that stretch reads QGFISLLLDK…KGPIPKYPWS (106 aa). 192–227 contributes to the FAD binding site; it reads KHEHIALIAGGTGITPMWQTARAIFKNPEDKTKVTL.

Belongs to the flavoprotein pyridine nucleotide cytochrome reductase family. FAD serves as cofactor.

It localises to the mitochondrion outer membrane. The catalysed reaction is 2 Fe(III)-[cytochrome b5] + NADH = 2 Fe(II)-[cytochrome b5] + NAD(+) + H(+). May mediate the reduction of outer membrane cytochrome b5. The polypeptide is NADH-cytochrome b5 reductase 2 (MCR1) (Phaeosphaeria nodorum (strain SN15 / ATCC MYA-4574 / FGSC 10173) (Glume blotch fungus)).